Consider the following 383-residue polypeptide: NifS-like protein (383 aa).

Pyridoxal 5'-phosphate-binding positions include Ser-58–Glu-59 and Ser-184–Asn-186.

Belongs to the class-V pyridoxal-phosphate-dependent aminotransferase family. NifS/IscS subfamily. Pyridoxal 5'-phosphate serves as cofactor.

The protein localises to the virion. The sequence is that of NifS-like protein from African swine fever virus (strain Badajoz 1971 Vero-adapted) (Ba71V).